The sequence spans 463 residues: Probable mannan endo-1,4-beta-mannosidase F (463 aa).

The N-terminal stretch at 1–18 (MRSLSSIALLSVVGAASA) is a signal peptide. Residues 19 to 54 (QAGPWAQCGGKSFSGSSECASGWKCQELNEWFSQCV) enclose the CBM1 domain. A disordered region spans residues 57-78 (AESTTPTVSSTPTPTDAPSVSI). The span at 59–77 (STTPTVSSTPTPTDAPSVS) shows a compositional bias: low complexity. Residues 75–118 (SVSITASVTTGINKSISVSSASKSTPLPSSSSASPSPRPTGSGS) form a ser-rich linker region. Asparagine 87 is a glycosylation site (N-linked (GlcNAc...) asparagine). A compositionally biased stretch (low complexity) spans 93–118 (SSASKSTPLPSSSSASPSPRPTGSGS). Positions 93 to 121 (SSASKSTPLPSSSSASPSPRPTGSGSFAK) are disordered. The tract at residues 119-463 (FAKADGLQFS…MDHMENVNKN (345 aa)) is catalytic. Tryptophan 171 and asparagine 285 together coordinate substrate. Glutamate 286 (proton donor/acceptor) is an active-site residue. Residue tyrosine 361 participates in substrate binding. Catalysis depends on glutamate 395, which acts as the Nucleophile. Position 424 (tryptophan 424) interacts with substrate.

It belongs to the glycosyl hydrolase 5 (cellulase A) family.

The protein localises to the secreted. It catalyses the reaction Random hydrolysis of (1-&gt;4)-beta-D-mannosidic linkages in mannans, galactomannans and glucomannans.. Its function is as follows. Endo-1,4-mannanase, a crucial enzyme for depolymerization of seed galactomannans and wood galactoglucomannans. This chain is Probable mannan endo-1,4-beta-mannosidase F (manF), found in Aspergillus oryzae (strain ATCC 42149 / RIB 40) (Yellow koji mold).